Reading from the N-terminus, the 239-residue chain is Tubulin beta-3 chain (239 aa).

Asn22 contributes to the GTP binding site. The segment at 207-239 is disordered; the sequence is EESNMNDLVSEYQQYQDASAEPXXEQEEDYEEA. Acidic residues predominate over residues 230–239; it reads XEQEEDYEEA.

Belongs to the tubulin family. In terms of assembly, dimer of alpha and beta chains. A typical microtubule is a hollow water-filled tube with an outer diameter of 25 nm and an inner diameter of 15 nM. Alpha-beta heterodimers associate head-to-tail to form protofilaments running lengthwise along the microtubule wall with the beta-tubulin subunit facing the microtubule plus end conferring a structural polarity. Microtubules usually have 13 protofilaments but different protofilament numbers can be found in some organisms and specialized cells. It depends on Mg(2+) as a cofactor.

It localises to the cytoplasm. The protein resides in the cytoskeleton. Functionally, tubulin is the major constituent of microtubules, a cylinder consisting of laterally associated linear protofilaments composed of alpha- and beta-tubulin heterodimers. Microtubules grow by the addition of GTP-tubulin dimers to the microtubule end, where a stabilizing cap forms. Below the cap, tubulin dimers are in GDP-bound state, owing to GTPase activity of alpha-tubulin. This Anemia phyllitidis (Fern) protein is Tubulin beta-3 chain (TUBB3).